We begin with the raw amino-acid sequence, 258 residues long: tRNA (guanine-N(7)-)-methyltransferase (258 aa).

S-adenosyl-L-methionine-binding positions include Gly-76, 99–100, 132–133, and Leu-152; these read EI and NA. Asp-155 is an active-site residue. 230–232 lines the S-adenosyl-L-methionine pocket; it reads TEE.

The protein belongs to the class I-like SAM-binding methyltransferase superfamily. TrmB family.

Its subcellular location is the nucleus. The enzyme catalyses guanosine(46) in tRNA + S-adenosyl-L-methionine = N(7)-methylguanosine(46) in tRNA + S-adenosyl-L-homocysteine. It functions in the pathway tRNA modification; N(7)-methylguanine-tRNA biosynthesis. Catalyzes the formation of N(7)-methylguanine at position 46 (m7G46) in tRNA. The sequence is that of tRNA (guanine-N(7)-)-methyltransferase from Brugia malayi (Filarial nematode worm).